The primary structure comprises 132 residues: Small ribosomal subunit protein uS8 (132 aa).

The protein belongs to the universal ribosomal protein uS8 family. In terms of assembly, part of the 30S ribosomal subunit. Contacts proteins S5 and S12.

In terms of biological role, one of the primary rRNA binding proteins, it binds directly to 16S rRNA central domain where it helps coordinate assembly of the platform of the 30S subunit. This Pediococcus pentosaceus (strain ATCC 25745 / CCUG 21536 / LMG 10740 / 183-1w) protein is Small ribosomal subunit protein uS8.